Consider the following 396-residue polypeptide: Elongation factor Tu (396 aa).

In terms of domain architecture, tr-type G spans 10–206 (KEHVNIGTIG…AVDTWIETPV (197 aa)). Residues 19–26 (GHVDHGKT) form a G1 region. Position 19–26 (19–26 (GHVDHGKT)) interacts with GTP. T26 is a Mg(2+) binding site. The interval 60-64 (GITIN) is G2. The G3 stretch occupies residues 81–84 (DCPG). GTP-binding positions include 81–85 (DCPGH) and 136–139 (NKCD). The interval 136–139 (NKCD) is G4. The tract at residues 176–178 (SAL) is G5.

The protein belongs to the TRAFAC class translation factor GTPase superfamily. Classic translation factor GTPase family. EF-Tu/EF-1A subfamily. Monomer.

The protein localises to the cytoplasm. It carries out the reaction GTP + H2O = GDP + phosphate + H(+). In terms of biological role, GTP hydrolase that promotes the GTP-dependent binding of aminoacyl-tRNA to the A-site of ribosomes during protein biosynthesis. In Mycoplasmopsis agalactiae (strain NCTC 10123 / CIP 59.7 / PG2) (Mycoplasma agalactiae), this protein is Elongation factor Tu.